The chain runs to 585 residues: Testis-specific serine kinase substrate (585 aa).

Low complexity predominate over residues 91 to 108; it reads EPDSSGTDSTTEDSGPLA. Residues 91 to 125 are disordered; sequence EPDSSGTDSTTEDSGPLALPGPPASPTTPWAPEDP. Residue Ser-224 is modified to Phosphoserine. Disordered stretches follow at residues 264–312 and 559–585; these read HGLS…SEQE and LEGSTGAMGGGSNGGAPPKRGSPGSEQ. Position 281 is a phosphoserine; by TSSK1 and TSSK2 (Ser-281). Residue Ser-309 is modified to Phosphoserine.

Post-translationally, phosphorylated on serine residue(s) by STK22A/TSSK1 and STK22B/TSSK2. As to expression, testis specific.

The protein resides in the cytoplasm. Its subcellular location is the cytoskeleton. It is found in the microtubule organizing center. It localises to the centrosome. The protein localises to the centriole. The protein resides in the cytoplasmic vesicle. Its subcellular location is the secretory vesicle. It is found in the acrosome. In terms of biological role, may play a role in testicular physiology, most probably in the process of spermatogenesis or spermatid development. The polypeptide is Testis-specific serine kinase substrate (Tsks) (Mus musculus (Mouse)).